The primary structure comprises 586 residues: 25S rRNA (adenine-N(1))-methyltransferase (586 aa).

2 disordered regions span residues 23 to 229 (GTAP…LTPL) and 536 to 573 (GKCVPKDGQEDTTKNKKGGQKPKPKFIEEKDEQEEVKD). A compositionally biased stretch (low complexity) spans 25–41 (APAAPAPASAPAVSSSK). Basic and acidic residues predominate over residues 65–83 (LWEKVIEQKKEGVADGVKK). Over residues 99 to 108 (KLSNSNNDGN) the composition is skewed to polar residues. A compositionally biased stretch (basic residues) spans 114–123 (NNKKKNKNKN). The segment covering 144–163 (GEEDEDDNNDDADEWEGIDE) has biased composition (acidic residues). Positions 164 to 182 (DEKHASSEKPTPKKDDKKQ) are enriched in basic and acidic residues. Low complexity predominate over residues 183–192 (QQLQQQQQQK). The span at 204–213 (NGTTSNWQQD) shows a compositional bias: polar residues. A compositionally biased stretch (low complexity) spans 217 to 229 (PKTATPAPKLTPL). A compositionally biased stretch (basic and acidic residues) spans 539–549 (VPKDGQEDTTK). The segment covering 550 to 559 (NKKGGQKPKP) has biased composition (basic residues).

The protein belongs to the methyltransferase superfamily. RRP8 family.

The protein localises to the nucleus. Its subcellular location is the nucleolus. In terms of biological role, S-adenosyl-L-methionine-dependent methyltransferase that specifically methylates the N(1) position of a conserved adenine in helix 25.1 in 25S rRNA. Required both for ribosomal 40S and 60S subunits biogenesis. Required for efficient pre-rRNA cleavage at site A2. The sequence is that of 25S rRNA (adenine-N(1))-methyltransferase (RPR8) from Chaetomium thermophilum (strain DSM 1495 / CBS 144.50 / IMI 039719) (Thermochaetoides thermophila).